The following is a 121-amino-acid chain: Large ribosomal subunit protein uL18 (121 aa).

This sequence belongs to the universal ribosomal protein uL18 family. As to quaternary structure, part of the 50S ribosomal subunit; part of the 5S rRNA/L5/L18/L25 subcomplex. Contacts the 5S and 23S rRNAs.

Functionally, this is one of the proteins that bind and probably mediate the attachment of the 5S RNA into the large ribosomal subunit, where it forms part of the central protuberance. The polypeptide is Large ribosomal subunit protein uL18 (Streptococcus suis (strain 98HAH33)).